A 94-amino-acid chain; its full sequence is Small ribosomal subunit protein bS18 (94 aa).

This sequence belongs to the bacterial ribosomal protein bS18 family. As to quaternary structure, part of the 30S ribosomal subunit. Forms a tight heterodimer with protein bS6.

Its function is as follows. Binds as a heterodimer with protein bS6 to the central domain of the 16S rRNA, where it helps stabilize the platform of the 30S subunit. The protein is Small ribosomal subunit protein bS18 of Leptothrix cholodnii (strain ATCC 51168 / LMG 8142 / SP-6) (Leptothrix discophora (strain SP-6)).